A 118-amino-acid polypeptide reads, in one-letter code: MIVLPLAPFPSDPGTHTNGSFFYFLKLLFVIERNFHHYPDDSLYVATISDNHTSKIKYFEQHKAPPTFRKTCNRNSYCSRWFYCCLTLSSFCSLRCVPPLEMADGIFHLNAKTRESEI.

This is an uncharacterized protein from Saccharomyces cerevisiae (strain ATCC 204508 / S288c) (Baker's yeast).